A 356-amino-acid chain; its full sequence is Carbohydrate sulfotransferase 10 (356 aa).

Over 1–6 (MHHQWL) the chain is Cytoplasmic. The helical; Signal-anchor for type II membrane protein transmembrane segment at 7 to 27 (LLAACFWVIFMFMVASKFITL) threads the bilayer. The Lumenal segment spans residues 28 to 356 (TFKDPDGYSA…GYQKPDFLLN (329 aa)). N-linked (GlcNAc...) asparagine glycosylation is present at asparagine 99. 3'-phosphoadenylyl sulfate-binding positions include 127–133 (PKVGNTQ) and 189–197 (RDPFERLIS). Residues asparagine 228 and asparagine 316 are each glycosylated (N-linked (GlcNAc...) asparagine).

This sequence belongs to the sulfotransferase 2 family.

It is found in the golgi apparatus membrane. The catalysed reaction is 3-O-{beta-D-GlcA-(1-&gt;[3)-alpha-D-Xyl-(1-&gt;3)-beta-D-GlcA-(1-&gt;](n)-4)-beta-D-Xyl-(1-&gt;4)-Rib-ol-P-Rib-ol-P-3-beta-D-GalNAc-(1-&gt;3)-beta-D-GlcNAc-(1-&gt;4)-O-6-P-alpha-D-Man}-L-Thr-[protein] + 3'-phosphoadenylyl sulfate = 3-O-{O-3-S-beta-D-GlcA-(1-&gt;[3)-alpha-D-Xyl-(1-&gt;3)-beta-D-GlcA-(1-&gt;](n)-4)-beta-D-Xyl-(1-&gt;4)-Rib-ol-P-Rib-ol-P-3-beta-D-GalNAc-(1-&gt;3)-beta-D-GlcNAc-(1-&gt;4)-O-6-P-alpha-D-Man}-L-Thr-[protein] + adenosine 3',5'-bisphosphate + H(+). The enzyme catalyses 17beta-estradiol 3-O-(beta-D-glucuronate) + 3'-phosphoadenylyl sulfate = 17beta-estradiol 3-O-(3-sulfo-beta-D-glucuronate) + adenosine 3',5'-bisphosphate + H(+). It catalyses the reaction 17beta-estradiol 3-O-(beta-D-glucuronate) 17-sulfate + 3'-phosphoadenylyl sulfate = 17beta-estradiol 3-O-(3-sulfo-beta-D-glucuronate) 17-sulfate + adenosine 3',5'-bisphosphate + H(+). It carries out the reaction 17beta-estradiol 17-O-(beta-D-glucuronate) + 3'-phosphoadenylyl sulfate = 17beta-estradiol 17-O-(3-sulfo-beta-D-glucuronate) + adenosine 3',5'-bisphosphate + H(+). The catalysed reaction is 16alpha,17beta-estriol 3-O-(beta-D-glucuronate) + 3'-phosphoadenylyl sulfate = 16alpha,17beta-estriol 3-O-(3-sulfo-beta-D-glucuronate) + adenosine 3',5'-bisphosphate + H(+). The enzyme catalyses 16alpha,17beta-estriol 16-O-(beta-D-glucuronate) + 3'-phosphoadenylyl sulfate = 16alpha,17beta-estriol 16-O-(3-sulfo-beta-D-glucuronate) + adenosine 3',5'-bisphosphate + H(+). It catalyses the reaction 16alpha,17beta-estriol 17-O-(beta-D-glucuronate) + 3'-phosphoadenylyl sulfate = 16alpha,17beta-estriol 17-O-(3-sulfo-beta-D-glucuronate) + adenosine 3',5'-bisphosphate + H(+). It carries out the reaction estrone 3-O-(beta-D-glucuronate) + 3'-phosphoadenylyl sulfate = estrone 3-O-(3-sulfo-beta-D-glucuronate) + adenosine 3',5'-bisphosphate + H(+). The catalysed reaction is 3alpha,20alpha-dihydroxy-5beta-pregnane 3-O-(beta-D-glucuronate) + 3'-phosphoadenylyl sulfate = 3alpha,20alpha-dihydroxy-5beta-pregnane 3-O-(3-sulfo-beta-D-glucuronate) + adenosine 3',5'-bisphosphate + H(+). The enzyme catalyses testosterone 17-O-(beta-D-glucuronate) + 3'-phosphoadenylyl sulfate = testosterone 17-O-(3-sulfo-beta-D-glucuronate) + adenosine 3',5'-bisphosphate + H(+). It catalyses the reaction 3beta-androst-5-en-17-one 3-O-(beta-D-glucuronate) + 3'-phosphoadenylyl sulfate = 3beta-androst-5-en-17-one 3-O-(3-sulfo-beta-D-glucuronate) + adenosine 3',5'-bisphosphate + H(+). It carries out the reaction 3alpha,17alpha-dihydroxy-5beta-androstane-11-one-17beta-carboxylate 3-O-(beta-D-glucuronate) + 3'-phosphoadenylyl sulfate = 3alpha,17alpha-dihydroxy-5beta-androstane-11-one-17beta-carboxylate 3-O-(3-sulfo-beta-D-glucuronate) + adenosine 3',5'-bisphosphate + H(+). The catalysed reaction is 3alpha-hydroxyetiocholan-17-one 3-O-(beta-D-glucuronate) + 3'-phosphoadenylyl sulfate = 3alpha-hydroxyetiocholan-17-one 3-O-(3-sulfo-beta-D-glucuronate) + adenosine 3',5'-bisphosphate + H(+). Its pathway is steroid metabolism. It participates in protein modification; carbohydrate sulfation. Its function is as follows. Catalyzes the transfer of sulfate from 3'-phosphoadenylyl sulfate (PAPS) to position 3 of terminal glucuronic acid of both protein- and lipid-linked oligosaccharides. Participates in biosynthesis of HNK-1 carbohydrate structure 3-O-sulfo-beta-D-GlcA-(1-&gt;3)-beta-D-Gal-(1-&gt;4)-D-GlcNAc-R, a sulfated glucuronyl-lactosaminyl residue carried by many neural recognition molecules, which is involved in cell interactions during ontogenetic development and in synaptic plasticity in the adult. May be indirectly involved in synapse plasticity of the hippocampus, via its role in HNK-1 biosynthesis. Sulfates terminal glucuronyl residue of the laminin globular (LG)-domain binding epitope on DAG1/alpha-dystroglycan and prevents further polymerization by LARGE1 glycosyltransferase. Likely defines the chain length of LG epitope, conferring binding specificity to extracellular matrix components. Plays a role in down-regulating the steroid hormones. Sulfates glucuronidated estrogens and androgens with an impact in hormone cycle and fertility. Has a preference for glucuronyl moiety at the 3-hydroxyl group of a sterol ring rather than the 17-hydroxyl group, showing high catalytic efficiency for 17beta-estradiol 3-O-(beta-D-glucuronate) and dehydroepiandrosterone 3-O-(beta-D-glucuronate) hormones. This is Carbohydrate sulfotransferase 10 from Mus musculus (Mouse).